Consider the following 31-residue polypeptide: Cytochrome b6-f complex subunit 6 (31 aa).

The chain crosses the membrane as a helical span at residues 4 to 26; sequence ITSYFGFLLAALTITSALLIGLN.

The protein belongs to the PetL family. In terms of assembly, the 4 large subunits of the cytochrome b6-f complex are cytochrome b6, subunit IV (17 kDa polypeptide, PetD), cytochrome f and the Rieske protein, while the 4 small subunits are PetG, PetL, PetM and PetN. The complex functions as a dimer.

The protein resides in the plastid. The protein localises to the chloroplast thylakoid membrane. Functionally, component of the cytochrome b6-f complex, which mediates electron transfer between photosystem II (PSII) and photosystem I (PSI), cyclic electron flow around PSI, and state transitions. PetL is important for photoautotrophic growth as well as for electron transfer efficiency and stability of the cytochrome b6-f complex. This is Cytochrome b6-f complex subunit 6 from Amborella trichopoda.